A 99-amino-acid polypeptide reads, in one-letter code: Regulatory protein FanB (99 aa).

Functionally, trans-acting protein involved in the regulation of the biogenesis of K99 fimbriae (FanC). The chain is Regulatory protein FanB (fanB) from Escherichia coli.